The chain runs to 286 residues: Bifunctional protein FolD (286 aa).

Residues 164–166 (GRS), Ser193, and Ile234 contribute to the NADP(+) site.

The protein belongs to the tetrahydrofolate dehydrogenase/cyclohydrolase family. As to quaternary structure, homodimer.

It catalyses the reaction (6R)-5,10-methylene-5,6,7,8-tetrahydrofolate + NADP(+) = (6R)-5,10-methenyltetrahydrofolate + NADPH. The catalysed reaction is (6R)-5,10-methenyltetrahydrofolate + H2O = (6R)-10-formyltetrahydrofolate + H(+). The protein operates within one-carbon metabolism; tetrahydrofolate interconversion. In terms of biological role, catalyzes the oxidation of 5,10-methylenetetrahydrofolate to 5,10-methenyltetrahydrofolate and then the hydrolysis of 5,10-methenyltetrahydrofolate to 10-formyltetrahydrofolate. The chain is Bifunctional protein FolD from Nitratidesulfovibrio vulgaris (strain ATCC 29579 / DSM 644 / CCUG 34227 / NCIMB 8303 / VKM B-1760 / Hildenborough) (Desulfovibrio vulgaris).